We begin with the raw amino-acid sequence, 367 residues long: B2 bradykinin receptor (367 aa).

Residues 1–36 (MLNITSQVLAPALNGSVSQSSGCPNTEWSGWLNVIQ) are Extracellular-facing. N-linked (GlcNAc...) asparagine glycosylation is found at Asn-3 and Asn-14. Residues 37–60 (APFLWVLFVLATLENLFVLSVFCL) form a helical membrane-spanning segment. Residues 61–69 (HKSSCTVAE) are Cytoplasmic-facing. Residues 70–94 (VYLGNLAAADLILACGLPFWAVTIA) form a helical membrane-spanning segment. The Extracellular segment spans residues 95 to 107 (NHFDWLFGEALCR). Cys-106 and Cys-187 are oxidised to a cystine. A helical membrane pass occupies residues 108–129 (VVNTMIYMNLYSSICFLMLVSI). Residues 130–151 (DRYLALVKTMSIGRMRRVRWAK) lie on the Cytoplasmic side of the membrane. Phosphotyrosine is present on Tyr-132. A helical membrane pass occupies residues 152 to 174 (LYSLVIWGCTLLLSSPMLVFRTM). Residues 175 to 197 (KDYRDEGYNVTACIIDYPSRSWE) lie on the Extracellular side of the membrane. An N-linked (GlcNAc...) asparagine glycan is attached at Asn-183. A helical transmembrane segment spans residues 198–224 (VFTNVLLNLVGFLLPLSVITFCTVQIL). Residues 225–243 (QVLRNNEMQKFKEIQTERR) lie on the Cytoplasmic side of the membrane. Residues 244-268 (ATVLVLAVLLLFVVCWLPFQVSTFL) form a helical membrane-spanning segment. Topologically, residues 269 to 287 (DTLLKLGVLSSCWDEHVID) are extracellular. The chain crosses the membrane as a helical span at residues 288 to 311 (VITQVGSFMGYSNSCLNPLVYVIV). Residues 312-367 (GKRFRKKSREVYRAACPKAGCVLEPVQAESSMGTLRTSISVERQIHKLPEWTRSSQ) are Cytoplasmic-facing. Residue Tyr-323 is modified to Phosphotyrosine. Cys-327 is lipidated: S-palmitoyl cysteine. Ser-342 is modified (phosphoserine). Thr-345 carries the post-translational modification Phosphothreonine. Phosphoserine; by GRK6 is present on residues Ser-349 and Ser-351.

This sequence belongs to the G-protein coupled receptor 1 family. Bradykinin receptor subfamily. BDKRB2 sub-subfamily. In terms of assembly, forms a complex with PECAM1 and GNAQ. Interacts with PECAM1.

Its subcellular location is the cell membrane. Functionally, receptor for bradykinin. It is associated with G proteins that activate a phosphatidylinositol-calcium second messenger system. The chain is B2 bradykinin receptor (BDKRB2) from Oryctolagus cuniculus (Rabbit).